A 274-amino-acid chain; its full sequence is uncharacterized protein (274 aa).

A coiled-coil region spans residues Asn99 to Lys206.

This is an uncharacterized protein from Dictyostelium discoideum (Social amoeba).